The following is a 650-amino-acid chain: DNA gyrase subunit B (650 aa).

The 115-residue stretch at 429–543 folds into the Toprim domain; sequence NELFIVEGDS…AGYVYIAQPP (115 aa). Positions 435, 508, and 510 each coordinate Mg(2+).

It belongs to the type II topoisomerase GyrB family. Heterotetramer, composed of two GyrA and two GyrB chains. In the heterotetramer, GyrA contains the active site tyrosine that forms a transient covalent intermediate with DNA, while GyrB binds cofactors and catalyzes ATP hydrolysis. Mg(2+) is required as a cofactor. The cofactor is Mn(2+). Requires Ca(2+) as cofactor.

It is found in the cytoplasm. The catalysed reaction is ATP-dependent breakage, passage and rejoining of double-stranded DNA.. In terms of biological role, a type II topoisomerase that negatively supercoils closed circular double-stranded (ds) DNA in an ATP-dependent manner to modulate DNA topology and maintain chromosomes in an underwound state. Negative supercoiling favors strand separation, and DNA replication, transcription, recombination and repair, all of which involve strand separation. Also able to catalyze the interconversion of other topological isomers of dsDNA rings, including catenanes and knotted rings. Type II topoisomerases break and join 2 DNA strands simultaneously in an ATP-dependent manner. This is DNA gyrase subunit B from Streptococcus pyogenes serotype M3 (strain ATCC BAA-595 / MGAS315).